The chain runs to 687 residues: Protein-glutamine gamma-glutamyltransferase 2 (687 aa).

Alanine 2 carries the N-acetylalanine modification. Position 60 is a phosphoserine (serine 60). Disulfide bonds link cysteine 230–cysteine 370 and cysteine 370–cysteine 371. Residues cysteine 277, histidine 335, and aspartate 358 contribute to the active site. Residues asparagine 398, aspartate 400, glutamate 437, glutamate 447, and glutamate 452 each contribute to the Ca(2+) site. Lysine 468 bears the N6-acetyllysine mark. 476–483 is a binding site for GTP; that stretch reads RIRVGQSM. Ca(2+) is bound at residue glutamate 539. 580–583 contributes to the GTP binding site; that stretch reads RDLY. Glutamine 633 is covalently cross-linked (Isoglutamyl lysine isopeptide (Gln-Lys) (interchain with K-?)).

The protein belongs to the transglutaminase superfamily. Transglutaminase family. As to quaternary structure, monomer. Interacts with phospholipase C; promoting alpha-1 adrenergic receptor signaling. Interacts with PLCD1. Homooligomer. The cofactor is Ca(2+). Disulfide bond formation inactivates the calcium-dependent acyltransferase activity. Cys-370 can form disulfide bonds with both Cys-230 and Cys-371: formation of a disulfide bond between Cys-230 and Cys-370 facilitates formation of the disulfide between Cys-370 and Cys-371, which promotes inactivation of the acyltransferase activity. May also form interchain disulfids between Cys-230 and Cys-370. Ca(2+) protects against disulfide bond formation and inactivation. Post-translationally, auto-transglutaminated: Forms covalent cross-links mediated by transglutaminase between Gln-633 and the epsilon-amino group of a lysine residue of itself or HMGB1, forming homopolymers and heteropolymers, respectively. In terms of processing, S-nitrosylated, leading to inactivation of the acyltransferase activity.

The protein localises to the cytoplasm. The protein resides in the cytosol. Its subcellular location is the nucleus. It localises to the chromosome. It is found in the secreted. The protein localises to the extracellular space. The protein resides in the extracellular matrix. Its subcellular location is the cell membrane. It localises to the mitochondrion. It is found in the perinuclear region. The catalysed reaction is L-glutaminyl-[protein] + L-lysyl-[protein] = [protein]-L-lysyl-N(6)-5-L-glutamyl-[protein] + NH4(+). It catalyses the reaction L-glutaminyl-[protein] + serotonin = 5-serotonyl-L-glutamyl-[protein] + NH4(+). The enzyme catalyses L-glutaminyl-[protein] + dopamine = 5-dopaminyl-L-glutamyl-[protein] + NH4(+). It carries out the reaction L-glutaminyl-[protein] + histamine = 5-histaminyl-L-glutamyl-[protein] + NH4(+). The catalysed reaction is L-glutaminyl-[protein] + (R)-noradrenaline = 5-(R)-noradrenalinyl-L-glutamyl-[protein] + NH4(+). It catalyses the reaction L-glutaminyl-[protein] + H2O = L-glutamyl-[protein] + NH4(+). Its activity is regulated as follows. Acyltransferase activity is regulated by the binding of GTP and Ca(2+): inactivated by GTP, which stabilizes its closed structure, thereby obstructing the accessibility of substrates to the active sites. In contrast, Ca(2+) acts as a cofactor by inducing conformational change to the active open form. In absence of Ca(2+), Mg(2+) may bind Ca(2+)-binding sites, promoting GTP-binding and subsequent inhibition of the acyltransferase activity. Extracellularly reduced and activated by CLIC3. Specifically inhibited by compound VA4 ((S)-Benzyl (6-Acrylamido-1-(4-((5-(dimethylamino)naphthalen-1-yl)sulfonyl)piperazin-1-yl)-1-oxohexan-2-yl)carbamate), which specifically abolishes both the transamidation and GTP-binding activities. In terms of biological role, calcium-dependent acyltransferase that catalyzes the formation of covalent bonds between peptide-bound glutamine and various primary amines, such as gamma-amino group of peptide-bound lysine, or mono- and polyamines, thereby producing cross-linked or aminated proteins, respectively. Involved in many biological processes, such as bone development, angiogenesis, wound healing, cellular differentiation, chromatin modification and apoptosis. Acts as a protein-glutamine gamma-glutamyltransferase by mediating the cross-linking of proteins, such as ACO2, HSPB6, FN1, HMGB1, RAP1GDS1, SLC25A4/ANT1, SPP1 and WDR54. Under physiological conditions, the protein cross-linking activity is inhibited by GTP; inhibition is relieved by Ca(2+) in response to various stresses. When secreted, catalyzes cross-linking of proteins of the extracellular matrix, such as FN1 and SPP1 resulting in the formation of scaffolds. Plays a key role during apoptosis, both by (1) promoting the cross-linking of cytoskeletal proteins resulting in condensation of the cytoplasm, and by (2) mediating cross-linking proteins of the extracellular matrix, resulting in the irreversible formation of scaffolds that stabilize the integrity of the dying cells before their clearance by phagocytosis, thereby preventing the leakage of harmful intracellular components. In addition to protein cross-linking, can use different monoamine substrates to catalyze a vast array of protein post-translational modifications: mediates aminylation of serotonin, dopamine, noradrenaline or histamine into glutamine residues of target proteins to generate protein serotonylation, dopaminylation, noradrenalinylation or histaminylation, respectively. Mediates protein serotonylation of small GTPases during activation and aggregation of platelets, leading to constitutive activation of these GTPases. Plays a key role in chromatin organization by mediating serotonylation and dopaminylation of histone H3. Catalyzes serotonylation of 'Gln-5' of histone H3 (H3Q5ser) during serotonergic neuron differentiation, thereby facilitating transcription. Acts as a mediator of neurotransmission-independent role of nuclear dopamine in ventral tegmental area (VTA) neurons: catalyzes dopaminylation of 'Gln-5' of histone H3 (H3Q5dop), thereby regulating relapse-related transcriptional plasticity in the reward system. Regulates vein remodeling by mediating serotonylation and subsequent inactivation of ATP2A2/SERCA2. Also acts as a protein deamidase by mediating the side chain deamidation of specific glutamine residues of proteins to glutamate. Catalyzes specific deamidation of protein gliadin, a component of wheat gluten in the diet. May also act as an isopeptidase cleaving the previously formed cross-links. Also able to participate in signaling pathways independently of its acyltransferase activity: acts as a signal transducer in alpha-1 adrenergic receptor-mediated stimulation of phospholipase C-delta (PLCD) activity and is required for coupling alpha-1 adrenergic agonists to the stimulation of phosphoinositide lipid metabolism. Has cytotoxic activity: is able to induce apoptosis independently of its acyltransferase activity. This chain is Protein-glutamine gamma-glutamyltransferase 2, found in Homo sapiens (Human).